The chain runs to 243 residues: Terpene cyclase dpmaB (243 aa).

Transmembrane regions (helical) follow at residues 11-31 (PGYLEVAWIADTCKLLMGLGW), 51-71 (ALMPLCCNFAWELTYAVIYPF), 112-132 (LPFIFIICIAAWTTAHLALAL), 141-161 (AFSAYGCQLLLSVGALCQLLS), 169-189 (SYFLWFCRFFGSLVLIPQDVL), and 207-227 (IWFVSIFLLLDGSYALCLWYV).

Belongs to the paxB family.

It is found in the membrane. It participates in secondary metabolite biosynthesis; terpenoid biosynthesis. Terpene cyclase; part of the gene cluster that mediates the biosynthesis of the diterpenoid pyrones subglutinols A and B. The first step of the pathway is the synthesis of the alpha-pyrone moiety by the polyketide synthase dpmaA via condensation of one acetyl-CoA starter unit with 3 malonyl-CoA units and 2 methylations. The alpha-pyrone is then combined with geranylgeranyl pyrophosphate (GGPP) formed by the GGPP synthase dpmaD through the action of the prenyltransferase dpmaC to yield a linear alpha-pyrone diterpenoid. Subsequent steps in the diterpenoid pyrone biosynthetic pathway involve the decalin core formation, which is initiated by the epoxidation of the C10-C11 olefin by the FAD-dependent oxidoreductase dpmaE, and is followed by a cyclization cascade catalyzed by the terpene cyclase dpmaB. The dehydrogenase dpmaF is then involved in tetrahydrofuran (THF) ring formation at the C5 unit to complete the formation of subglutinols A and B. This is Terpene cyclase dpmaB from Metarhizium anisopliae (Entomophthora anisopliae).